We begin with the raw amino-acid sequence, 653 residues long: Cytidine monophosphate-N-acetylneuraminic acid hydroxylase (653 aa).

The region spanning 11 to 120 (LSPEETSELK…PEYNEDGSLD (110 aa)) is the Rieske domain. Residues cysteine 62, histidine 64, cysteine 83, and histidine 86 each coordinate [2Fe-2S] cluster. A disordered region spans residues 596–622 (WNPSQATPAVEAKDPSSDSKDSATKPG). Residues 606–618 (EAKDPSSDSKDSA) are compositionally biased toward basic and acidic residues. The chain crosses the membrane as a helical span at residues 630–647 (LLRPLGIVVALVGVGVAI).

Belongs to the CMP-Neu5Ac hydroxylase family. [2Fe-2S] cluster is required as a cofactor.

It is found in the membrane. The enzyme catalyses CMP-N-acetyl-beta-neuraminate + 2 Fe(II)-[cytochrome b5] + O2 + 2 H(+) = CMP-N-glycoloyl-beta-neuraminate + 2 Fe(III)-[cytochrome b5] + H2O. It functions in the pathway amino-sugar metabolism; N-acetylneuraminate metabolism. In terms of biological role, sialic acids are components of carbohydrate chains of glycoconjugates and are involved in cell-cell recognition and cell-pathogen interactions. Catalyzes the conversion of CMP-N-acetylneuraminic acid (CMP-Neu5Ac) into its hydroxylated derivative CMP-N-glycolylneuraminic acid (CMP-Neu5Gc), a sialic acid abundantly expressed at the surface of many cells. In Asterias rubens (Common European starfish), this protein is Cytidine monophosphate-N-acetylneuraminic acid hydroxylase (cnh).